The primary structure comprises 389 residues: MRFGFSTAGESHGPAEVVIVHGVPAGLRLLAEDVDRDLARRQLGYGRGGRQKIERDRVEFLGGVRHGRTLGSPVAMLVRNRDYANWERRMNPAPVEDPPEPITLPRPGHADLAGMQKYGFGDLRNVLERSSARETVARVAAGAVARRLLGEFGVRVFSAVYRIGEVAMDRALAAAGAGKADRSEVRCPDPEVSERMKAEIDAARHARDALGGEFVVVAEGCPPGLGSYADWRDRLDARLAAAVVSINAIKGVEIGDAFEAARRRSSEVQDEIVRRGGALGRASNRLGGLEGGMTNGEPVVVAAAMKPISTIARALRTVDLSTGEEARAFRERADSCAVPAAAVIGEAMVAVVLAEAFLEKFGADALEDIRASYEHYMRRIGLPARRADA.

2 residues coordinate NADP(+): arginine 41 and arginine 47. FMN-binding positions include 129–131 (RSS), 247–248 (NA), glycine 291, 306–310 (KPIST), and arginine 332.

The protein belongs to the chorismate synthase family. As to quaternary structure, homotetramer. Requires FMNH2 as cofactor.

It catalyses the reaction 5-O-(1-carboxyvinyl)-3-phosphoshikimate = chorismate + phosphate. It participates in metabolic intermediate biosynthesis; chorismate biosynthesis; chorismate from D-erythrose 4-phosphate and phosphoenolpyruvate: step 7/7. Its function is as follows. Catalyzes the anti-1,4-elimination of the C-3 phosphate and the C-6 proR hydrogen from 5-enolpyruvylshikimate-3-phosphate (EPSP) to yield chorismate, which is the branch point compound that serves as the starting substrate for the three terminal pathways of aromatic amino acid biosynthesis. This reaction introduces a second double bond into the aromatic ring system. This is Chorismate synthase from Rubrobacter xylanophilus (strain DSM 9941 / JCM 11954 / NBRC 16129 / PRD-1).